The following is a 473-amino-acid chain: Probable DNA N(6)-methyladenine demethylase ALKBH1B (473 aa).

357-359 (NFY) contributes to the 2-oxoglutarate binding site. His-368, Asp-391, and His-449 together coordinate Fe cation. Residue 461–465 (RLFFR) participates in 2-oxoglutarate binding.

The protein belongs to the alkB family. Fe(2+) serves as cofactor. In terms of tissue distribution, undetectable.

It carries out the reaction an N(6)-methyl-2'-deoxyadenosine in DNA + 2-oxoglutarate + O2 = a 2'-deoxyadenosine in DNA + formaldehyde + succinate + CO2. Its function is as follows. Dioxygenase that may catalyzes DNA N(6)-methyladenine (6 mA) demethylation. Requires molecular oxygen, alpha-ketoglutarate and iron. This is Probable DNA N(6)-methyladenine demethylase ALKBH1B from Arabidopsis thaliana (Mouse-ear cress).